The following is a 134-amino-acid chain: Small ribosomal subunit protein uS11 (134 aa).

The protein belongs to the universal ribosomal protein uS11 family. As to quaternary structure, part of the 30S ribosomal subunit. Interacts with proteins S7 and S18. Binds to IF-3.

In terms of biological role, located on the platform of the 30S subunit, it bridges several disparate RNA helices of the 16S rRNA. Forms part of the Shine-Dalgarno cleft in the 70S ribosome. In Delftia acidovorans (strain DSM 14801 / SPH-1), this protein is Small ribosomal subunit protein uS11.